Consider the following 213-residue polypeptide: Adenylate kinase (213 aa).

Residue 10–15 (GSGKGT) coordinates ATP. The tract at residues 30 to 59 (SVGDLLRNIISSSSELGKKIKGTVESGNLI) is NMP. AMP is bound by residues Arg36, 57–59 (NLI), 83–86 (GFPR), and Gln90. The tract at residues 125–160 (NRLACLDCKNIYSVSSFKSTTCAKCKSTRLEKRIDD) is LID. Arg126 contacts ATP. Residues Cys129 and Cys132 each coordinate Zn(2+). 135–136 (IY) provides a ligand contact to ATP. Zn(2+)-binding residues include Cys146 and Cys149. Positions 157 and 169 each coordinate AMP. Leu195 serves as a coordination point for ATP.

This sequence belongs to the adenylate kinase family. Monomer.

The protein localises to the cytoplasm. The enzyme catalyses AMP + ATP = 2 ADP. It functions in the pathway purine metabolism; AMP biosynthesis via salvage pathway; AMP from ADP: step 1/1. Catalyzes the reversible transfer of the terminal phosphate group between ATP and AMP. Plays an important role in cellular energy homeostasis and in adenine nucleotide metabolism. The sequence is that of Adenylate kinase from Wolbachia pipientis wMel.